Here is a 223-residue protein sequence, read N- to C-terminus: uncharacterized protein (223 aa).

Helical transmembrane passes span 22–42 (LTVG…FVVV), 59–79 (GVAL…ATLI), 85–105 (IFSL…WCSM), and 164–184 (MAWA…SQAF).

It belongs to the Rht family.

It is found in the cell membrane. This is an uncharacterized protein from Escherichia coli (strain K12).